The chain runs to 659 residues: Putative RING finger protein R311 (659 aa).

The RING-type zinc-finger motif lies at 502–540 (CPVCYDDDYIKTKLICGHTVCLTCVLNILPNSKGCPLCM).

In Acanthamoeba polyphaga (Amoeba), this protein is Putative RING finger protein R311.